A 250-amino-acid polypeptide reads, in one-letter code: Undecaprenyl-diphosphatase (250 aa).

A run of 7 helical transmembrane segments spans residues 35-55 (DLSVFALLHLATLAAIVIFVG), 73-93 (INLTLKIIVSTIPAAIFGVLL), 100-120 (SLSNLKIISFFFLVTSAALLI), 146-166 (ALAIFPGISRSGFTLFGSLLI), 171-191 (EIALKYSFLVSIPVILGAGLL), 200-220 (SYSISSAIVAFFFGLLSLFIL), and 229-249 (LKIFSAYCIFISIFSFVLGGI).

This sequence belongs to the UppP family.

Its subcellular location is the cell inner membrane. The enzyme catalyses di-trans,octa-cis-undecaprenyl diphosphate + H2O = di-trans,octa-cis-undecaprenyl phosphate + phosphate + H(+). Functionally, catalyzes the dephosphorylation of undecaprenyl diphosphate (UPP). Confers resistance to bacitracin. The chain is Undecaprenyl-diphosphatase from Thermosipho melanesiensis (strain DSM 12029 / CIP 104789 / BI429).